The primary structure comprises 125 residues: Small ribosomal subunit protein uS13 (125 aa).

The segment at 90–125 is disordered; that stretch reads QRHRKGLPVRGQRTKTNARTRKGPKRTVAGKKKATK.

It belongs to the universal ribosomal protein uS13 family. As to quaternary structure, part of the 30S ribosomal subunit. Forms a loose heterodimer with protein S19. Forms two bridges to the 50S subunit in the 70S ribosome.

In terms of biological role, located at the top of the head of the 30S subunit, it contacts several helices of the 16S rRNA. In the 70S ribosome it contacts the 23S rRNA (bridge B1a) and protein L5 of the 50S subunit (bridge B1b), connecting the 2 subunits; these bridges are implicated in subunit movement. Contacts the tRNAs in the A and P-sites. In Bifidobacterium longum (strain DJO10A), this protein is Small ribosomal subunit protein uS13.